The sequence spans 266 residues: MNPWQRFARQRLARSRWNRDPAALDPADTPAFEQAWQRQCHMEQTIVARVPEGDIPAALLENIAASLAIWLDEGDFAPPERAAIVRHHARLELAFADIARQAPQPDLSTVQAWYLRHQTQFMRPEQRLTRHLLLTVDNDREAVHQRILGLYRQINASRDAFAPLAQRHSHCPSALEEGRLGWISRGLLYPQLETALFSLAENALSLPIASELGWHLLWCEAIRPAAPMEPQQALESARDYLWQQSQQRHQRQWLEQMISRQPGLCG.

Residues 124–221 enclose the PpiC domain; it reads PEQRLTRHLL…LGWHLLWCEA (98 aa).

The protein belongs to the PpiC/parvulin rotamase family.

It carries out the reaction [protein]-peptidylproline (omega=180) = [protein]-peptidylproline (omega=0). Required for the activation and stabilization of the iron-component (NifH) of nitrogenase. Probable PPIase. This chain is Putative peptidyl-prolyl cis-trans isomerase NifM (nifM), found in Klebsiella oxytoca.